A 92-amino-acid polypeptide reads, in one-letter code: PqqA binding protein (92 aa).

It belongs to the PqqD family. As to quaternary structure, monomer. Interacts with PqqE.

Its pathway is cofactor biosynthesis; pyrroloquinoline quinone biosynthesis. Its function is as follows. Functions as a PqqA binding protein and presents PqqA to PqqE, in the pyrroloquinoline quinone (PQQ) biosynthetic pathway. In Stutzerimonas stutzeri (strain A1501) (Pseudomonas stutzeri), this protein is PqqA binding protein.